The following is a 62-amino-acid chain: Large ribosomal subunit protein uL15 (62 aa).

It belongs to the universal ribosomal protein uL15 family.

The polypeptide is Large ribosomal subunit protein uL15 (RPL28) (Candida albicans (Yeast)).